Consider the following 212-residue polypeptide: Thiamine-phosphate synthase (212 aa).

Residues 43-47 (QYRNK) and Asn75 contribute to the 4-amino-2-methyl-5-(diphosphooxymethyl)pyrimidine site. Mg(2+)-binding residues include Asp76 and Asp95. Ser114 lines the 4-amino-2-methyl-5-(diphosphooxymethyl)pyrimidine pocket. A 2-[(2R,5Z)-2-carboxy-4-methylthiazol-5(2H)-ylidene]ethyl phosphate-binding site is contributed by 141 to 143 (SMT). Lys144 is a 4-amino-2-methyl-5-(diphosphooxymethyl)pyrimidine binding site. Position 171 (Gly171) interacts with 2-[(2R,5Z)-2-carboxy-4-methylthiazol-5(2H)-ylidene]ethyl phosphate.

It belongs to the thiamine-phosphate synthase family. It depends on Mg(2+) as a cofactor.

It carries out the reaction 2-[(2R,5Z)-2-carboxy-4-methylthiazol-5(2H)-ylidene]ethyl phosphate + 4-amino-2-methyl-5-(diphosphooxymethyl)pyrimidine + 2 H(+) = thiamine phosphate + CO2 + diphosphate. The enzyme catalyses 2-(2-carboxy-4-methylthiazol-5-yl)ethyl phosphate + 4-amino-2-methyl-5-(diphosphooxymethyl)pyrimidine + 2 H(+) = thiamine phosphate + CO2 + diphosphate. It catalyses the reaction 4-methyl-5-(2-phosphooxyethyl)-thiazole + 4-amino-2-methyl-5-(diphosphooxymethyl)pyrimidine + H(+) = thiamine phosphate + diphosphate. It participates in cofactor biosynthesis; thiamine diphosphate biosynthesis; thiamine phosphate from 4-amino-2-methyl-5-diphosphomethylpyrimidine and 4-methyl-5-(2-phosphoethyl)-thiazole: step 1/1. Its function is as follows. Condenses 4-methyl-5-(beta-hydroxyethyl)thiazole monophosphate (THZ-P) and 2-methyl-4-amino-5-hydroxymethyl pyrimidine pyrophosphate (HMP-PP) to form thiamine monophosphate (TMP). This is Thiamine-phosphate synthase from Nitrosomonas eutropha (strain DSM 101675 / C91 / Nm57).